Consider the following 439-residue polypeptide: Mitochondrial distribution and morphology protein 12 (439 aa).

In terms of domain architecture, SMP-LTD spans 1–439; it reads MSIDINWDTI…VYPSFWTFLV (439 aa). 2 disordered regions span residues 65-165 and 229-284; these read PLPD…PGAL and LTLT…HEKS. A compositionally biased stretch (acidic residues) spans 69-90; the sequence is FYEDDEDYPDEEGDEAENEAED. The span at 109-121 shows a compositional bias: basic and acidic residues; it reads PSRDSQSRERGRG. Residues 229–243 show a composition bias toward polar residues; the sequence is LTLTPQSHPDPTSRP.

This sequence belongs to the MDM12 family. As to quaternary structure, component of the ER-mitochondria encounter structure (ERMES) or MDM complex, composed of MMM1, MDM10, mdm12 and MDM34. An MMM1 homodimer associates with one molecule of mdm12 on each side in a pairwise head-to-tail manner, and the SMP-LTD domains of MMM1 and mdm12 generate a continuous hydrophobic tunnel for phospholipid trafficking.

Its subcellular location is the mitochondrion outer membrane. The protein localises to the endoplasmic reticulum membrane. In terms of biological role, component of the ERMES/MDM complex, which serves as a molecular tether to connect the endoplasmic reticulum (ER) and mitochondria. Components of this complex are involved in the control of mitochondrial shape and protein biogenesis, and function in nonvesicular lipid trafficking between the ER and mitochondria. mdm12 is required for the interaction of the ER-resident membrane protein MMM1 and the outer mitochondrial membrane-resident beta-barrel protein MDM10. The mdm12-MMM1 subcomplex functions in the major beta-barrel assembly pathway that is responsible for biogenesis of all mitochondrial outer membrane beta-barrel proteins, and acts in a late step after the SAM complex. The MDM10-mdm12-MMM1 subcomplex further acts in the TOM40-specific pathway after the action of the mdm12-MMM1 complex. Essential for establishing and maintaining the structure of mitochondria and maintenance of mtDNA nucleoids. This chain is Mitochondrial distribution and morphology protein 12, found in Pyrenophora tritici-repentis (strain Pt-1C-BFP) (Wheat tan spot fungus).